Here is a 199-residue protein sequence, read N- to C-terminus: Chaperone protein TorD (199 aa).

It belongs to the TorD/DmsD family. TorD subfamily.

Its subcellular location is the cytoplasm. Its function is as follows. Involved in the biogenesis of TorA. Acts on TorA before the insertion of the molybdenum cofactor and, as a result, probably favors a conformation of the apoenzyme that is competent for acquiring the cofactor. This Actinobacillus pleuropneumoniae serotype 7 (strain AP76) protein is Chaperone protein TorD.